Reading from the N-terminus, the 624-residue chain is Dihydroxy-acid dehydratase (624 aa).

Residue aspartate 81 participates in Mg(2+) binding. Cysteine 122 provides a ligand contact to [2Fe-2S] cluster. Mg(2+)-binding residues include aspartate 123 and lysine 124. The residue at position 124 (lysine 124) is an N6-carboxylysine. Position 195 (cysteine 195) interacts with [2Fe-2S] cluster. Glutamate 499 is a binding site for Mg(2+). Residue serine 525 is the Proton acceptor of the active site.

The protein belongs to the IlvD/Edd family. Homodimer. Requires [2Fe-2S] cluster as cofactor. Mg(2+) serves as cofactor.

The catalysed reaction is (2R)-2,3-dihydroxy-3-methylbutanoate = 3-methyl-2-oxobutanoate + H2O. It catalyses the reaction (2R,3R)-2,3-dihydroxy-3-methylpentanoate = (S)-3-methyl-2-oxopentanoate + H2O. The protein operates within amino-acid biosynthesis; L-isoleucine biosynthesis; L-isoleucine from 2-oxobutanoate: step 3/4. Its pathway is amino-acid biosynthesis; L-valine biosynthesis; L-valine from pyruvate: step 3/4. Functionally, functions in the biosynthesis of branched-chain amino acids. Catalyzes the dehydration of (2R,3R)-2,3-dihydroxy-3-methylpentanoate (2,3-dihydroxy-3-methylvalerate) into 2-oxo-3-methylpentanoate (2-oxo-3-methylvalerate) and of (2R)-2,3-dihydroxy-3-methylbutanoate (2,3-dihydroxyisovalerate) into 2-oxo-3-methylbutanoate (2-oxoisovalerate), the penultimate precursor to L-isoleucine and L-valine, respectively. In Shewanella baltica (strain OS155 / ATCC BAA-1091), this protein is Dihydroxy-acid dehydratase.